Reading from the N-terminus, the 546-residue chain is Glucose-6-phosphate isomerase (546 aa).

Glutamate 353 (proton donor) is an active-site residue. Active-site residues include histidine 384 and lysine 512.

Belongs to the GPI family.

It localises to the cytoplasm. The catalysed reaction is alpha-D-glucose 6-phosphate = beta-D-fructose 6-phosphate. The protein operates within carbohydrate biosynthesis; gluconeogenesis. It functions in the pathway carbohydrate degradation; glycolysis; D-glyceraldehyde 3-phosphate and glycerone phosphate from D-glucose: step 2/4. Its function is as follows. Catalyzes the reversible isomerization of glucose-6-phosphate to fructose-6-phosphate. This chain is Glucose-6-phosphate isomerase, found in Methylococcus capsulatus (strain ATCC 33009 / NCIMB 11132 / Bath).